Consider the following 179-residue polypeptide: Nucleoside diphosphate kinase 6 (179 aa).

ATP contacts are provided by Lys18, Phe67, Arg95, Thr101, Arg115, and Asn125. His128 functions as the Pros-phosphohistidine intermediate in the catalytic mechanism.

Belongs to the NDK family. It depends on Mg(2+) as a cofactor.

The catalysed reaction is a 2'-deoxyribonucleoside 5'-diphosphate + ATP = a 2'-deoxyribonucleoside 5'-triphosphate + ADP. It carries out the reaction a ribonucleoside 5'-diphosphate + ATP = a ribonucleoside 5'-triphosphate + ADP. Major role in the synthesis of nucleoside triphosphates other than ATP. The ATP gamma phosphate is transferred to the NDP beta phosphate via a ping-pong mechanism, using a phosphorylated active-site intermediate. The sequence is that of Nucleoside diphosphate kinase 6 (nme6) from Xenopus tropicalis (Western clawed frog).